The primary structure comprises 188 residues: dCTP deaminase (188 aa).

DCTP contacts are provided by residues 111-116 (KSTYAR), 135-137 (TLE), Gln156, Tyr170, and Gln180. Glu137 acts as the Proton donor/acceptor in catalysis.

It belongs to the dCTP deaminase family. In terms of assembly, homotrimer.

The catalysed reaction is dCTP + H2O + H(+) = dUTP + NH4(+). Its pathway is pyrimidine metabolism; dUMP biosynthesis; dUMP from dCTP (dUTP route): step 1/2. Catalyzes the deamination of dCTP to dUTP. The chain is dCTP deaminase from Azotobacter vinelandii (strain DJ / ATCC BAA-1303).